The chain runs to 633 residues: Chaperone protein dnaK2 (633 aa).

Thr-197 bears the Phosphothreonine; by autocatalysis mark. Residues 513 to 532 (AEQNASSDKERREKIERKNQ) are compositionally biased toward basic and acidic residues. Disordered stretches follow at residues 513–534 (AEQN…NQAD) and 598–633 (QQAG…TETK). Low complexity predominate over residues 606 to 619 (PGAAPQDGGTTSSD). A compositionally biased stretch (acidic residues) spans 620 to 633 (GGDDVIDADFTETK).

It belongs to the heat shock protein 70 family.

In terms of biological role, acts as a chaperone. The protein is Chaperone protein dnaK2 (dnaK2) of Nostoc sp. (strain PCC 7120 / SAG 25.82 / UTEX 2576).